Here is an 861-residue protein sequence, read N- to C-terminus: Leucine--tRNA ligase (861 aa).

The 'HIGH' region signature appears at 42-52 (PYPSGRIHMGH). Positions 623–627 (KMSKS) match the 'KMSKS' region motif. Lysine 626 is an ATP binding site.

The protein belongs to the class-I aminoacyl-tRNA synthetase family.

It is found in the cytoplasm. It catalyses the reaction tRNA(Leu) + L-leucine + ATP = L-leucyl-tRNA(Leu) + AMP + diphosphate. This is Leucine--tRNA ligase from Caulobacter sp. (strain K31).